The primary structure comprises 353 residues: S-adenosylmethionine:tRNA ribosyltransferase-isomerase (353 aa).

The protein belongs to the QueA family. As to quaternary structure, monomer.

It is found in the cytoplasm. It carries out the reaction 7-aminomethyl-7-carbaguanosine(34) in tRNA + S-adenosyl-L-methionine = epoxyqueuosine(34) in tRNA + adenine + L-methionine + 2 H(+). Its pathway is tRNA modification; tRNA-queuosine biosynthesis. Its function is as follows. Transfers and isomerizes the ribose moiety from AdoMet to the 7-aminomethyl group of 7-deazaguanine (preQ1-tRNA) to give epoxyqueuosine (oQ-tRNA). The protein is S-adenosylmethionine:tRNA ribosyltransferase-isomerase of Burkholderia vietnamiensis (strain G4 / LMG 22486) (Burkholderia cepacia (strain R1808)).